The following is a 170-amino-acid chain: MSEEIKNEEIVEEVEATEEVVETPEKSELDLANERAEEFENKYLRAHAEMQNIQRRANEERQTIQRYRSQDLAKKILPSLDNLERALQVEGLTEDVKKGLEMVQESLIQALKEEGVEEVATDVFDPNLHMAIQTVPATDDCPAEHIAQVFQKGYKLHERLLRPAMVVVSE.

The segment at 1–29 (MSEEIKNEEIVEEVEATEEVVETPEKSEL) is disordered. A compositionally biased stretch (acidic residues) spans 10–22 (IVEEVEATEEVVE).

Belongs to the GrpE family. In terms of assembly, homodimer.

The protein resides in the cytoplasm. Functionally, participates actively in the response to hyperosmotic and heat shock by preventing the aggregation of stress-denatured proteins, in association with DnaK and GrpE. It is the nucleotide exchange factor for DnaK and may function as a thermosensor. Unfolded proteins bind initially to DnaJ; upon interaction with the DnaJ-bound protein, DnaK hydrolyzes its bound ATP, resulting in the formation of a stable complex. GrpE releases ADP from DnaK; ATP binding to DnaK triggers the release of the substrate protein, thus completing the reaction cycle. Several rounds of ATP-dependent interactions between DnaJ, DnaK and GrpE are required for fully efficient folding. This chain is Protein GrpE, found in Streptococcus suis (strain 98HAH33).